The chain runs to 444 residues: Bifunctional protein GlmU (444 aa).

The tract at residues 1-226 is pyrophosphorylase; it reads MTDSTHRTTA…EAELAGVNSR (226 aa). UDP-N-acetyl-alpha-D-glucosamine is bound by residues 13–16, Lys-27, Gln-75, and 80–81; these read LAAG and GT. Asp-103 is a binding site for Mg(2+). Residues Gly-139, Glu-153, Asn-168, and Asn-224 each coordinate UDP-N-acetyl-alpha-D-glucosamine. Position 224 (Asn-224) interacts with Mg(2+). A linker region spans residues 227-247; sequence SELARAEATLQTRLRNAAMDA. The tract at residues 248–444 is N-acetyltransferase; the sequence is GVTLVAPETV…QSLKARKEQG (197 aa). Arg-313 and Lys-331 together coordinate UDP-N-acetyl-alpha-D-glucosamine. Residue His-343 is the Proton acceptor of the active site. UDP-N-acetyl-alpha-D-glucosamine-binding residues include Tyr-346 and Asn-357. Residues Ala-360, 366–367, Ser-385, Ala-403, and Arg-420 each bind acetyl-CoA; that span reads NY.

This sequence in the N-terminal section; belongs to the N-acetylglucosamine-1-phosphate uridyltransferase family. The protein in the C-terminal section; belongs to the transferase hexapeptide repeat family. In terms of assembly, homotrimer. Mg(2+) serves as cofactor.

It localises to the cytoplasm. The enzyme catalyses alpha-D-glucosamine 1-phosphate + acetyl-CoA = N-acetyl-alpha-D-glucosamine 1-phosphate + CoA + H(+). The catalysed reaction is N-acetyl-alpha-D-glucosamine 1-phosphate + UTP + H(+) = UDP-N-acetyl-alpha-D-glucosamine + diphosphate. The protein operates within nucleotide-sugar biosynthesis; UDP-N-acetyl-alpha-D-glucosamine biosynthesis; N-acetyl-alpha-D-glucosamine 1-phosphate from alpha-D-glucosamine 6-phosphate (route II): step 2/2. Its pathway is nucleotide-sugar biosynthesis; UDP-N-acetyl-alpha-D-glucosamine biosynthesis; UDP-N-acetyl-alpha-D-glucosamine from N-acetyl-alpha-D-glucosamine 1-phosphate: step 1/1. It functions in the pathway bacterial outer membrane biogenesis; LPS lipid A biosynthesis. Its function is as follows. Catalyzes the last two sequential reactions in the de novo biosynthetic pathway for UDP-N-acetylglucosamine (UDP-GlcNAc). The C-terminal domain catalyzes the transfer of acetyl group from acetyl coenzyme A to glucosamine-1-phosphate (GlcN-1-P) to produce N-acetylglucosamine-1-phosphate (GlcNAc-1-P), which is converted into UDP-GlcNAc by the transfer of uridine 5-monophosphate (from uridine 5-triphosphate), a reaction catalyzed by the N-terminal domain. The sequence is that of Bifunctional protein GlmU from Gluconobacter oxydans (strain 621H) (Gluconobacter suboxydans).